The sequence spans 389 residues: Ankyrin repeat domain-containing protein 42 (389 aa).

The disordered stretch occupies residues 1-21 (MPGVANSGPSTSSRETANPCS). A compositionally biased stretch (polar residues) spans 7 to 19 (SGPSTSSRETANP). ANK repeat units lie at residues 25–60 (VHFG…DITH), 64–93 (RGWT…NLTA), 97–126 (RGCT…DPSV), 130–159 (REWR…SIED), 163–192 (NGNL…SATQ), 200–232 (NGEN…DLED), 235–265 (TLAF…NINE), 269–298 (NGST…DSNI), and 302–332 (AGER…DIDD).

This Homo sapiens (Human) protein is Ankyrin repeat domain-containing protein 42 (ANKRD42).